We begin with the raw amino-acid sequence, 818 residues long: Myosin-A (818 aa).

Ser19 is modified (phosphoserine; by PKG). One can recognise a Myosin motor domain in the interval Met97 to Arg771. Position 191 to 198 (Gly191 to Thr198) interacts with ATP. The actin-binding stretch occupies residues Pro661–Glu671. The interval Lys773–Gln818 is tail.

It belongs to the TRAFAC class myosin-kinesin ATPase superfamily. Myosin family. As to quaternary structure, component of the glideosome complex composed of GAP50, GAP45, MTIP and MyoA; the complex is formed during the late schizont stage and in merozoites. MyoA, MTIP and GAP45 probably form an initial complex in the cytoplasm which is then recruited to the outer face of the inner membrane complex via the interaction with GAP50. Interacts with ACT1.

The protein resides in the cell membrane. Its function is as follows. Myosins are actin-based motor molecules with ATPase activity. Unconventional myosins serve in intracellular movements. Their highly divergent tails are presumed to bind to membranous compartments, which would be moved relative to actin filaments. This Plasmodium falciparum (isolate 3D7) protein is Myosin-A.